A 1390-amino-acid chain; its full sequence is DNA-directed RNA polymerase subunit beta'' (1390 aa).

Cys-224, Cys-294, Cys-301, and Cys-304 together coordinate Zn(2+).

Belongs to the RNA polymerase beta' chain family. RpoC2 subfamily. In terms of assembly, in plastids the minimal PEP RNA polymerase catalytic core is composed of four subunits: alpha, beta, beta', and beta''. When a (nuclear-encoded) sigma factor is associated with the core the holoenzyme is formed, which can initiate transcription. Requires Zn(2+) as cofactor.

It localises to the plastid. It is found in the chloroplast. It catalyses the reaction RNA(n) + a ribonucleoside 5'-triphosphate = RNA(n+1) + diphosphate. In terms of biological role, DNA-dependent RNA polymerase catalyzes the transcription of DNA into RNA using the four ribonucleoside triphosphates as substrates. The chain is DNA-directed RNA polymerase subunit beta'' from Ceratophyllum demersum (Rigid hornwort).